The chain runs to 769 residues: Gephyrin (769 aa).

The segment at 14–153 (QIRVGVLTVS…LPGSKKGSQE (140 aa)) is MPT Mo-transferase. Positions 140–349 (LIINLPGSKK…VDITKVARRH (210 aa)) are interaction with GABARAP. Disordered regions lie at residues 181–232 (DELE…DSSS) and 260–299 (TASL…SKGV). Pro residues predominate over residues 187–199 (PSPPPPLSPPPTT). Ser188 and Ser194 each carry phosphoserine. Thr198 carries the phosphothreonine modification. Ser200 bears the Phosphoserine mark. The S-palmitoyl cysteine moiety is linked to residue Cys212. Positions 261 to 286 (ASLSTTPSESPRAQATSRLSTASCPT) are enriched in polar residues. Phosphoserine is present on Ser262. A phosphothreonine mark is found at Thr265 and Thr266. Residues Ser268 and Ser270 each carry the phosphoserine modification. Cys284 carries the S-palmitoyl cysteine lipid modification. Residues 327-769 (SSKENILRAS…VVDVMVIGRL (443 aa)) form an MPT adenylyltransferase region. Phosphoserine is present on Ser338.

This sequence in the N-terminal section; belongs to the MoaB/Mog family. In the C-terminal section; belongs to the MoeA family. In terms of assembly, homotrimer, homodimer and homooligomer. Interacts with SRGAP2 (via SH3 domain). Interacts with GLRB. Interacts with GABARAP. Interacts with GABRA3. GABRA3 and GLRB occupy overlapping binding sites. Interacts with ARHGAP32; IQSEC3, INSYN1 and INSYN2A. Mg(2+) is required as a cofactor. Post-translationally, palmitoylated. Palmitoylation is stimulated by GABA type A receptors activity. Palmitoylation by ZDHHC12 regulates clustering at synapses.

The protein resides in the postsynaptic cell membrane. The protein localises to the cell membrane. It localises to the cytoplasm. Its subcellular location is the cytosol. It is found in the cytoskeleton. The protein resides in the cell projection. The protein localises to the dendrite. It localises to the postsynaptic density. The catalysed reaction is molybdopterin + ATP + H(+) = adenylyl-molybdopterin + diphosphate. It carries out the reaction adenylyl-molybdopterin + molybdate = Mo-molybdopterin + AMP + H(+). It functions in the pathway cofactor biosynthesis; molybdopterin biosynthesis. With respect to regulation, inhibited by copper and tungsten. Functionally, microtubule-associated protein involved in membrane protein-cytoskeleton interactions. It is thought to anchor the inhibitory glycine receptor (GLYR) to subsynaptic microtubules. Acts as a major instructive molecule at inhibitory synapses, where it also clusters GABA type A receptors. In terms of biological role, also has a catalytic activity and catalyzes two steps in the biosynthesis of the molybdenum cofactor. In the first step, molybdopterin is adenylated. Subsequently, molybdate is inserted into adenylated molybdopterin and AMP is released. This chain is Gephyrin (Gphn), found in Mus musculus (Mouse).